A 517-amino-acid polypeptide reads, in one-letter code: Beclin-1-like protein (517 aa).

The segment at 76–106 (LPRHKPPQSQGIPPRPRGASSPQPDATQSGK) is disordered. Over residues 95–105 (SSPQPDATQSG) the composition is skewed to polar residues. Residues 172–266 (CLECMRVLSD…NRFNELEDRY (95 aa)) adopt a coiled-coil conformation.

This sequence belongs to the beclin family. In terms of assembly, component of a phosphatidylinositol 3-kinase (PI3K) complex composed of ATG6, SH3P2 and FREE1. Interacts with SINAT1, SINAT2, SINAT5, SINAT6, TRAF1A and TRAF1B. Interacts with TUBB8/TUB8. Component of a complex made of VPS38/USL1 and PI3K main subunits such as VPS15, ATG6/VPS30 and VPS34. Binds directly to VPS38/USL1. In terms of processing, ubiquitinated. The interaction with SINAT1 or SINAT2, and the presence of TRAF1A/MUSE14 and TRAF1B/MUSE13, mediates its proteasome-dependent degradation. In terms of tissue distribution, highly expressed in mature pollen grains. Expressed in roots, leaves, stems, flowers and siliques.

The protein resides in the cytoplasm. The protein localises to the cytoskeleton. Its function is as follows. Required for normal plant development. Required for pollen germination. Required for autophagic activity. Required to limit the pathogen-associated cell death response. May be involved in vacuolar protein sorting. Binds to microtubules. May facilitate efficient recruitment of other ATG proteins to assemble scaffolds for autophagosome biogenesis. The protein is Beclin-1-like protein of Arabidopsis thaliana (Mouse-ear cress).